The primary structure comprises 360 residues: Methylthioribose-1-phosphate isomerase (360 aa).

D252 acts as the Proton donor in catalysis.

Belongs to the eIF-2B alpha/beta/delta subunits family. MtnA subfamily.

It localises to the cytoplasm. The protein resides in the nucleus. It catalyses the reaction 5-(methylsulfanyl)-alpha-D-ribose 1-phosphate = 5-(methylsulfanyl)-D-ribulose 1-phosphate. The protein operates within amino-acid biosynthesis; L-methionine biosynthesis via salvage pathway; L-methionine from S-methyl-5-thio-alpha-D-ribose 1-phosphate: step 1/6. In terms of biological role, catalyzes the interconversion of methylthioribose-1-phosphate (MTR-1-P) into methylthioribulose-1-phosphate (MTRu-1-P). The polypeptide is Methylthioribose-1-phosphate isomerase (Trichoplax adhaerens (Trichoplax reptans)).